Reading from the N-terminus, the 241-residue chain is 3-deoxy-D-manno-octulosonic acid kinase (241 aa).

The active site involves Asp-171.

This sequence belongs to the protein kinase superfamily. KdkA/RfaP family.

It is found in the cell inner membrane. It carries out the reaction an alpha-Kdo-(2-&gt;6)-lipid IVA + ATP = a 4-O-phospho-alpha-Kdo-(2-&gt;6)-lipid IVA + ADP + H(+). It functions in the pathway bacterial outer membrane biogenesis; LPS core biosynthesis. Its function is as follows. Catalyzes the ATP-dependent phosphorylation of the 3-deoxy-D-manno-octulosonic acid (Kdo) residue in Kdo-lipid IV(A) at the 4-OH position. This chain is 3-deoxy-D-manno-octulosonic acid kinase, found in Haemophilus influenzae (strain PittGG).